A 580-amino-acid polypeptide reads, in one-letter code: Methyl-CpG-binding domain protein 4 (580 aa).

The disordered stretch occupies residues 1-36; the sequence is MGTTGLESLSLGDRGAAPTVTSSERLVPDPPNDLRK. Positions 76–148 constitute an MBD domain; sequence ATAGTECRKS…EDFDFTVLSK (73 aa). A phosphoserine mark is found at Ser318 and Ser428. Asp560 is a catalytic residue.

In terms of assembly, interacts with MLH1.

The protein localises to the nucleus. In terms of biological role, mismatch-specific DNA N-glycosylase involved in DNA repair. Has thymine glycosylase activity and is specific for G:T mismatches within methylated and unmethylated CpG sites. Can also remove uracil or 5-fluorouracil in G:U mismatches. Has no lyase activity. Was first identified as methyl-CpG-binding protein. The chain is Methyl-CpG-binding domain protein 4 from Homo sapiens (Human).